A 253-amino-acid polypeptide reads, in one-letter code: 5-oxoprolinase subunit A (253 aa).

The protein belongs to the LamB/PxpA family. In terms of assembly, forms a complex composed of PxpA, PxpB and PxpC.

The enzyme catalyses 5-oxo-L-proline + ATP + 2 H2O = L-glutamate + ADP + phosphate + H(+). Catalyzes the cleavage of 5-oxoproline to form L-glutamate coupled to the hydrolysis of ATP to ADP and inorganic phosphate. This chain is 5-oxoprolinase subunit A, found in Bacillus cereus (strain Q1).